We begin with the raw amino-acid sequence, 306 residues long: Cysteine synthase (306 aa).

K46 carries the N6-(pyridoxal phosphate)lysine modification. Pyridoxal 5'-phosphate is bound by residues N76, 180–184 (GSGGT), and S267.

Belongs to the cysteine synthase/cystathionine beta-synthase family. Homodimer. Pyridoxal 5'-phosphate is required as a cofactor.

The catalysed reaction is O-acetyl-L-serine + hydrogen sulfide = L-cysteine + acetate. It functions in the pathway amino-acid biosynthesis; L-cysteine biosynthesis; L-cysteine from L-serine: step 2/2. This Helicobacter pylori (strain ATCC 700392 / 26695) (Campylobacter pylori) protein is Cysteine synthase (cysM).